Reading from the N-terminus, the 403-residue chain is Tyrosine--tRNA ligase (403 aa).

The 'HIGH' region signature appears at 46-55; sequence PTAPDLHLGH. A 'KMSKS' region motif is present at residues 230–234; sequence KMSKS. Lys-233 contacts ATP. Residues 342-402 form the S4 RNA-binding domain; sequence LFITQILNQA…GKKAYAKVTV (61 aa).

Belongs to the class-I aminoacyl-tRNA synthetase family. TyrS type 2 subfamily. Homodimer.

Its subcellular location is the cytoplasm. It catalyses the reaction tRNA(Tyr) + L-tyrosine + ATP = L-tyrosyl-tRNA(Tyr) + AMP + diphosphate + H(+). Its function is as follows. Catalyzes the attachment of tyrosine to tRNA(Tyr) in a two-step reaction: tyrosine is first activated by ATP to form Tyr-AMP and then transferred to the acceptor end of tRNA(Tyr). This is Tyrosine--tRNA ligase from Psychrobacter arcticus (strain DSM 17307 / VKM B-2377 / 273-4).